Reading from the N-terminus, the 900-residue chain is Iodate reductase subunit IdrA (900 aa).

The disordered stretch occupies residues 1–21 (MSENIKQGGAGTFMQAPQDSV). Residues cysteine 35, cysteine 38, and cysteine 42 each coordinate [3Fe-4S] cluster.

Belongs to the prokaryotic molybdopterin-containing oxidoreductase family. In terms of assembly, the iodate reductase (Idr) complex is composed of a molybdopterin-dependent iodate reductase (IdrA and IdrB subunits) and two associated peroxidases (IdrP1 and IdrP2). It depends on [3Fe-4S] cluster as a cofactor. Requires Mo-bis(molybdopterin guanine dinucleotide) as cofactor.

The protein localises to the periplasm. In terms of biological role, involved in iodate respiration. May accept electrons from cytochrome c551, and catalyze the reduction of iodate (IO(3)(-)) to produce the chemically unstable intermediate hypoiodous acid (HIO). This intermediate then undergoes abiotic disproportionation to yield two molecules of iodide (I(-)) and one molecule of iodate. The resultant iodate subsequently cycles back into the reductive pathway. The initial reduction of iodate may inadvertently produce low levels of incidental toxic H(2)O(2), which is detoxified by IdrP1 and IdrP2. This chain is Iodate reductase subunit IdrA, found in Denitromonas iodatirespirans.